The sequence spans 216 residues: Octanoyltransferase (216 aa).

The BPL/LPL catalytic domain maps to 32 to 207 (ENSPDELWLV…TFSQLLGYEH (176 aa)). Substrate is bound by residues 71–78 (RGGQVTYH), 138–140 (SLG), and 151–153 (GLA). The Acyl-thioester intermediate role is filled by Cys169.

Belongs to the LipB family.

It localises to the cytoplasm. The enzyme catalyses octanoyl-[ACP] + L-lysyl-[protein] = N(6)-octanoyl-L-lysyl-[protein] + holo-[ACP] + H(+). It functions in the pathway protein modification; protein lipoylation via endogenous pathway; protein N(6)-(lipoyl)lysine from octanoyl-[acyl-carrier-protein]: step 1/2. In terms of biological role, catalyzes the transfer of endogenously produced octanoic acid from octanoyl-acyl-carrier-protein onto the lipoyl domains of lipoate-dependent enzymes. Lipoyl-ACP can also act as a substrate although octanoyl-ACP is likely to be the physiological substrate. The protein is Octanoyltransferase of Shewanella amazonensis (strain ATCC BAA-1098 / SB2B).